A 695-amino-acid chain; its full sequence is MKILKFSLLSKLKHKDFIVTSFRNNIINSIKNNNTNNNGLLKFSNNKYNFLNNNNNNNNNNVNKINNVYYINNNFKNVMENKIKPSSIQFFSSLSNKYNLNSFTTTKPQPCQAKPPSSKQQQQQQQQQQQQQQQQQQQQSKKKTSKDRLRDILKKTVITPQEFLNVLQRFAKNYKKTIASILAAIALIIYSYETPDSYFGSMMNVIVRFYRAMKCATKIMINYKILSYTPEKSSEYLEKSKICHQESADLILDLCLTNGGLYIKAGQYIASLNHILPIQYTKTLSVLQDQAPWRDFYEVESVFLKDLGNAPNHYFSDFDRLPIAAASLAQVHRAITKEGEEVAVKVQYVDLQRNFDGDIFTHNVLLTLVNMAFPDFEFNWMAEEMKNVLIKELDFSQEADNAERAAQDLSSNNNAYIPKVFRPYSSKRILTTEFIHGCKINNVQAIRSMGLSEKTVSQRFMEIMCEQIFIHAFVHVDPHAGNVLVRQHPNHPNQPQIVLLDHGLYREYDEEFRLNFCNLYKNLVLCNNKKVEKYSKALGVQNWKLFSTMILMRNFEGSSVGLSNSISSEELEKLLSGAIERLKDINLLMKAMPRHLLLILRNNNLLRSINMELGSPVNRFSIMARYAAKGLNSNSSKNSGIIRLVKSVEEKVSLEVMLKGYELYYYFVNRILSILIRLHIINPEKLIKDQMKKLG.

Residues 105–119 (TTKPQPCQAKPPSSK) are compositionally biased toward polar residues. Residues 105–149 (TTKPQPCQAKPPSSKQQQQQQQQQQQQQQQQQQQQSKKKTSKDRL) are disordered. Residues 118 to 150 (SKQQQQQQQQQQQQQQQQQQQQSKKKTSKDRLR) adopt a coiled-coil conformation. Positions 120 to 139 (QQQQQQQQQQQQQQQQQQQQ) are enriched in low complexity. The helical transmembrane segment at 177–193 (TIASILAAIALIIYSYE) threads the bilayer. Residues 317–695 (DFDRLPIAAA…LIKDQMKKLG (379 aa)) form the Protein kinase domain. ATP contacts are provided by residues 323–331 (IAAASLAQV) and Lys-345. Asp-477 serves as the catalytic Proton acceptor.

Belongs to the protein kinase superfamily. ADCK protein kinase family.

It localises to the membrane. The polypeptide is Probable serine/threonine-protein kinase abkD (abkD) (Dictyostelium discoideum (Social amoeba)).